Reading from the N-terminus, the 357-residue chain is 3-isopropylmalate dehydrogenase (357 aa).

Substrate contacts are provided by arginine 97, arginine 107, arginine 135, and aspartate 224. The Mg(2+) site is built by aspartate 224, aspartate 248, and aspartate 252. Glycine 282–asparagine 294 serves as a coordination point for NAD(+).

Belongs to the isocitrate and isopropylmalate dehydrogenases family. LeuB type 1 subfamily. Homodimer. Requires Mg(2+) as cofactor. Mn(2+) serves as cofactor.

The protein resides in the cytoplasm. It carries out the reaction (2R,3S)-3-isopropylmalate + NAD(+) = 4-methyl-2-oxopentanoate + CO2 + NADH. The protein operates within amino-acid biosynthesis; L-leucine biosynthesis; L-leucine from 3-methyl-2-oxobutanoate: step 3/4. Its function is as follows. Catalyzes the oxidation of 3-carboxy-2-hydroxy-4-methylpentanoate (3-isopropylmalate) to 3-carboxy-4-methyl-2-oxopentanoate. The product decarboxylates to 4-methyl-2 oxopentanoate. The sequence is that of 3-isopropylmalate dehydrogenase from Synechococcus sp. (strain CC9605).